Reading from the N-terminus, the 455-residue chain is MRKIPNHGTLRMTKVAYPLGLCVGLFIYVAYIKWHRASAAQAFFTIAGAASGVRWTQQAFSSPDSATRGHEVFYGIMFDAGSTGTRIHVFQFARPPGETPTLTHETFKALKPGLSAYADDVEKSAQGIQELLNVAKQHIPYDFWKATPLVLKATAGLRLLPGEKAQKLLQKVKEVFKASPFLVGDDCVSIMNGTDEGVSAWITVNFLTGSLKTPGSSSVGMLDLGGGSTQITFLPRVEGTLQASPPGHLTALQMFNRTFKLYSYSYLGLGLMSARLAILGGVEGKPAEDDKELVSPCLSPRFRGKWEHAEVTYRISGQKAVGLYELCASRVSEVLRNKVHRTEEAQHVDFYAFSYYYDLAASFGLIDAEKGGSLVVGDFEIAAKYVCRTLETQPPSSPFACMDLTYISLLLHEFGFPGDKVLKLARKIDNVETSWALGAIFHYIDSLKRQKVPAL.

The Cytoplasmic segment spans residues 1 to 12 (MRKIPNHGTLRM). A helical; Signal-anchor for type II membrane protein transmembrane segment spans residues 13–32 (TKVAYPLGLCVGLFIYVAYI). The Lumenal portion of the chain corresponds to 33 to 455 (KWHRASAAQA…SLKRQKVPAL (423 aa)). A glycan (N-linked (GlcNAc...) asparagine) is linked at asparagine 192. The active-site Proton acceptor is the glutamate 196. Asparagine 256 carries N-linked (GlcNAc...) asparagine glycosylation. Cystine bridges form between cysteine 297-cysteine 327 and cysteine 387-cysteine 401.

Belongs to the GDA1/CD39 NTPase family. It depends on Ca(2+) as a cofactor. The cofactor is Mg(2+). Post-translationally, might be cleaved at the N-terminus, retained in an intracellular membrane compartment and in addition be released into the extracellular medium. In terms of processing, N-glycosylated. As to expression, expressed in heart and brain.

Its subcellular location is the golgi apparatus membrane. The protein resides in the secreted. The protein localises to the cell membrane. It carries out the reaction a ribonucleoside 5'-diphosphate + H2O = a ribonucleoside 5'-phosphate + phosphate + H(+). The enzyme catalyses IDP + H2O = IMP + phosphate + H(+). It catalyses the reaction GDP + H2O = GMP + phosphate + H(+). The catalysed reaction is UDP + H2O = UMP + phosphate + H(+). Functionally, catalyzes the hydrolysis of nucleoside triphosphates and diphosphates in a calcium- or magnesium-dependent manner. Has a strong preference for nucleoside diphosphates, preferentially hydrolyzes GDP, IDP, and UDP, with slower hydrolysis of CDP, ITP, GTP, CTP, ADP, and UTP and virtually no hydrolysis of ATP. The membrane bound form might support glycosylation reactions in the Golgi apparatus and, when released from cells, might catalyze the hydrolysis of extracellular nucleotides. This Rattus norvegicus (Rat) protein is Ectonucleoside triphosphate diphosphohydrolase 6 (Entpd6).